We begin with the raw amino-acid sequence, 81 residues long: Apolipoprotein C-I, acidic form (81 aa).

Residues 1-24 form the signal peptide; sequence MRLFLSLLVVVLSMVLKGPTPAQG.

Belongs to the apolipoprotein C1 family.

Its subcellular location is the secreted. The chain is Apolipoprotein C-I, acidic form (APOC1A) from Macaca fascicularis (Crab-eating macaque).